The primary structure comprises 56 residues: Large ribosomal subunit protein bL32 (56 aa).

The disordered stretch occupies residues 1-37; the sequence is MAVQQNKKSRSKRGMRRSHDALSTAQLSVDATSGELH. Basic residues predominate over residues 7–16; sequence KKSRSKRGMR. Residues 21–31 are compositionally biased toward polar residues; the sequence is ALSTAQLSVDA.

The protein belongs to the bacterial ribosomal protein bL32 family.

The sequence is that of Large ribosomal subunit protein bL32 from Shewanella loihica (strain ATCC BAA-1088 / PV-4).